The sequence spans 426 residues: Trigger factor (426 aa).

Residues 160 to 240 (GDTVIGDVTK…IKEVKHLELP (81 aa)) form the PPIase FKBP-type domain.

The protein belongs to the FKBP-type PPIase family. Tig subfamily.

Its subcellular location is the cytoplasm. The catalysed reaction is [protein]-peptidylproline (omega=180) = [protein]-peptidylproline (omega=0). Involved in protein export. Acts as a chaperone by maintaining the newly synthesized protein in an open conformation. Functions as a peptidyl-prolyl cis-trans isomerase. This chain is Trigger factor, found in Chlorobaculum tepidum (strain ATCC 49652 / DSM 12025 / NBRC 103806 / TLS) (Chlorobium tepidum).